A 180-amino-acid chain; its full sequence is Putative 3-methyladenine DNA glycosylase (180 aa).

Belongs to the DNA glycosylase MPG family.

The chain is Putative 3-methyladenine DNA glycosylase from Ehrlichia chaffeensis (strain ATCC CRL-10679 / Arkansas).